We begin with the raw amino-acid sequence, 205 residues long: MNEQLHNRTMAFAGILQAIAQVQYLARHGESDTDELAASLHTILVTDPETPADVYQDKAGLHKGYQLVLNQLGDSSQKDVEITRYLVGILALERKLARSNSGLSMLAERINQVNRQLHHFAITDEQVIANLASIYSDIISNLGPKIQISGNPLCLQRPIVQQKIRALLLAAMRSAVLWRQLGGKRRHLVFARKAILDTAKKSLTL.

This sequence belongs to the HflD family.

It localises to the cytoplasm. It is found in the cell inner membrane. This chain is High frequency lysogenization protein HflD homolog, found in Shewanella oneidensis (strain ATCC 700550 / JCM 31522 / CIP 106686 / LMG 19005 / NCIMB 14063 / MR-1).